A 224-amino-acid polypeptide reads, in one-letter code: MSIRSWPAAERPRERLLELGAASLSDAELLAIFLRTGVAGKSAVDLARHLLNQFDGLRPLLDADLSAFTSQLGLGPAKFAQLQAVMEMARRHMAESLRRESALENPTQVRSYLKALLRHEPHEVFGCLFLDNKHRVMTFEILFRGTINASYVHPRQVVKRAMAHNAASLILCHNHPSGITTPSRSDIDLTKRLKEALLLVDVHVLDHVIVGDGEPLSMVERGLM.

One can recognise an MPN domain in the interval 102–224 (ALENPTQVRS…PLSMVERGLM (123 aa)). His173, His175, and Asp186 together coordinate Zn(2+). A JAMM motif motif is present at residues 173 to 186 (HNHPSGITTPSRSD).

This sequence belongs to the UPF0758 family.

The polypeptide is UPF0758 protein Psyr_0222 (Pseudomonas syringae pv. syringae (strain B728a)).